The sequence spans 268 residues: Purine nucleoside phosphorylase (268 aa).

Phosphate contacts are provided by residues serine 36, histidine 68, 88-90 (RIH), and alanine 120. Glutamate 189 is a binding site for a purine D-ribonucleoside. Serine 208 provides a ligand contact to phosphate. Residue asparagine 231 participates in a purine D-ribonucleoside binding.

It belongs to the PNP/MTAP phosphorylase family. Homotrimer.

The catalysed reaction is a purine 2'-deoxy-D-ribonucleoside + phosphate = a purine nucleobase + 2-deoxy-alpha-D-ribose 1-phosphate. Its pathway is purine metabolism; purine nucleoside salvage. Its function is as follows. The purine nucleoside phosphorylases catalyze the phosphorolytic breakdown of the N-glycosidic bond in the beta-(deoxy)ribonucleoside molecules, with the formation of the corresponding free purine bases and pentose-1-phosphate. Cleaves guanosine, inosine, 2'-deoxyguanosine and 2'-deoxyinosine. This Mycobacterium leprae (strain TN) protein is Purine nucleoside phosphorylase (punA).